The primary structure comprises 143 residues: Transcriptional regulator SlyA (143 aa).

In terms of domain architecture, HTH marR-type spans 2-135 (ESTLGSDLAR…LSGLIDKLER (134 aa)). The segment at residues 49–72 (QIQLAKAIGIEQPSLVRTLDQLEE) is a DNA-binding region (H-T-H motif).

The protein belongs to the SlyA family. Homodimer.

In terms of biological role, transcription regulator that can specifically activate or repress expression of target genes. This chain is Transcriptional regulator SlyA, found in Yersinia enterocolitica serotype O:8 / biotype 1B (strain NCTC 13174 / 8081).